The chain runs to 508 residues: Erythropoietin receptor (508 aa).

Positions 1–24 are cleaved as a signal peptide; sequence MNHLWTHLWPGVGSLCLLLAGAAW. Over 25-250 the chain is Extracellular; the sequence is ASLPKPLDPK…SLLTASDLDP (226 aa). C52 and C62 are disulfide-bonded. N-linked (GlcNAc...) asparagine glycosylation occurs at N76. A disulfide bridge links C91 with C107. A Fibronectin type-III domain is found at 148 to 247; that stretch reads PPAGLLARRA…EPASLLTASD (100 aa). The N-linked (GlcNAc...) asparagine glycan is linked to N184. A WSXWS motif motif is present at residues 233–237; that stretch reads WSAWS. The chain crosses the membrane as a helical span at residues 251 to 273; it reads LILTLSLILVLILLLLAVLALLS. The Cytoplasmic segment spans residues 274 to 508; that stretch reads HRRTLKQKIW…PSPPGYVACS (235 aa). K281 is covalently cross-linked (Glycyl lysine isopeptide (Lys-Gly) (interchain with G-Cter in ubiquitin)). A Box 1 motif motif is present at residues 282–290; it reads IWPGIPSPE. Phosphotyrosine; by JAK2 occurs at positions 368 and 426. The ITIM motif signature appears at 452–457; the sequence is IKYLYL. K453 is covalently cross-linked (Glycyl lysine isopeptide (Lys-Gly) (interchain with G-Cter in ubiquitin)). A phosphotyrosine; by JAK2 mark is found at Y454, Y456, Y468, Y489, and Y504. Residues 467–508 are disordered; sequence DYSSGGSQGAQGDSLNSPFLNPYENSLIPAPEPSPPGYVACS.

Belongs to the type I cytokine receptor family. Type 1 subfamily. In terms of assembly, forms homodimers on EPO stimulation. The tyrosine-phosphorylated form interacts with several SH2 domain-containing proteins including LYN, the adapter protein SH2B2, PTPN6, PTPN11, JAK2, PI3 kinases, STAT5A/B, SOCS3, CRKL. Interacts with INPP5D/SHIP1. SH2B2 binding inhibits the JAK-STAT signaling. Interacts with RHEX; this interaction occurs in a erythropoietin (EPO)-dependent manner. Interacts with ATXN2L. On EPO stimulation, phosphorylated on C-terminal tyrosine residues by JAK2. The phosphotyrosine motifs are also recruitment sites for several SH2-containing proteins and adapter proteins which mediate cell proliferation. Phosphorylation on Tyr-454 is required for PTPN6 interaction, Tyr-426 for PTPN11. Tyr-426 is also required for SOCS3 binding, but Tyr-454/Tyr-456 motif is the preferred binding site. Post-translationally, ubiquitinated by the ECS(SOCS2) complex following ligand-binding and phosphorylation by JAK2, leading to its degradation by the proteasome. Regulation by the ECS(SOCS2) complex acts as a negative feedback loop of erythropoietin-mediated signaling pathway. Ubiquitination at Lys-281 mediates receptor internalization, whereas ubiquitination at Lys-453 promotes trafficking of activated receptors to the lysosomes for degradation. Ubiquitinated by NOSIP; appears to be either multi-monoubiquitinated or polyubiquitinated. Ubiquitination mediates proliferation and survival of EPO-dependent cells.

It localises to the cell membrane. Receptor for erythropoietin, which mediates erythropoietin-induced erythroblast proliferation and differentiation. Upon EPO stimulation, EPOR dimerizes triggering the JAK2/STAT5 signaling cascade. In some cell types, can also activate STAT1 and STAT3. May also activate the LYN tyrosine kinase. Its function is as follows. Isoform EPOR-T acts as a dominant-negative receptor of EPOR-mediated signaling. In Canis lupus familiaris (Dog), this protein is Erythropoietin receptor (EPOR).